Here is a 952-residue protein sequence, read N- to C-terminus: Inactive atromentin synthetase invA6 (952 aa).

The adenylation (A) domain stretch occupies residues 58 to 462; the sequence is DSSVQTRSFS…NGRIKDTVIV (405 aa). The 79-residue stretch at 594–672 folds into the Carrier domain; that stretch reads APSTETEKTL…SLAKYVDSLV (79 aa). The interval 599–669 is thiolation and peptide carrier (T) domain; it reads TEKTLGRLYA…VISSLAKYVD (71 aa). Ser-631 is subject to O-(pantetheine 4'-phosphoryl)serine. Residues 695–939 form a thioesterase (TE) domain region; sequence PIFMVHPGIG…LMDFDHVSGF (245 aa).

It belongs to the ATP-dependent AMP-binding enzyme family.

In terms of biological role, inactive atromentin synthetase homolog. Does not accept 4-hydroxyphenylpyruvate (4-HPP) as substrate. Both the adenylation (A) and the thioesterase (TE) domain of the invA6 enzyme are inactive. The sequence is that of Inactive atromentin synthetase invA6 (invA6) from Paxillus involutus (Naked brimcap).